The sequence spans 62 residues: UPF0434 protein FTM_0733 (62 aa).

This sequence belongs to the UPF0434 family.

The sequence is that of UPF0434 protein FTM_0733 from Francisella tularensis subsp. mediasiatica (strain FSC147).